A 281-amino-acid polypeptide reads, in one-letter code: uncharacterized protein (281 aa).

Transmembrane regions (helical) follow at residues 30–50, 54–74, 76–96, 106–126, 153–173, 198–218, 235–255, and 259–279; these read AIVA…FIVI, VFIS…GYYF, FNPL…MGWV, TLIG…IDLT, AGLD…FLAI, IALT…IALL, MMAV…ALSY, and LSSG…SLAF.

It belongs to the ABC-3 integral membrane protein family.

It is found in the cell membrane. This is an uncharacterized protein from Synechocystis sp. (strain ATCC 27184 / PCC 6803 / Kazusa).